Reading from the N-terminus, the 999-residue chain is Collagen alpha-1(I) chain (999 aa).

A disordered region spans residues 1–999 (SYGYDEKSAG…PGPPGPPGPP (999 aa)). Allysine is present on Lys-7. The residue at position 8 (Ser-8) is a Phosphoserine. Residues Pro-27, Pro-30, Pro-33, Pro-42, Pro-45, Pro-48, Pro-62, Pro-77, Pro-83, Pro-92, and Pro-98 each carry the 4-hydroxyproline modification. Residues 65-79 (NGDDGEAGKPGRPGE) show a composition bias toward basic and acidic residues. The residue at position 101 (Lys-101) is a 5-hydroxylysine; alternate. Lys-101 carries an O-linked (Gal...) hydroxylysine; alternate glycan. Residue Ser-107 is modified to Phosphoserine. Residues 115-131 (DAGPAGPKGEPGSPGEN) are compositionally biased toward low complexity. A 4-hydroxyproline mark is found at Pro-125, Pro-128, Pro-134, Pro-143, Pro-149, Pro-170, Pro-179, Pro-182, Pro-209, Pro-212, Pro-224, Pro-230, Pro-239, Pro-245, Pro-248, and Pro-263. The span at 149–167 (PGASGPAGARGNDGATGAA) shows a compositional bias: low complexity. The segment covering 169 to 181 (PPGPTGPAGPPGF) has biased composition (pro residues). Residues 215–254 (AGAAGPAGNPGADGQPGAKGANGAPGIAGAPGFPGARGPS) are compositionally biased toward low complexity. Lys-266 is modified (5-hydroxylysine). Residues Pro-272, Pro-275, Pro-287, Pro-296, Pro-311, Pro-317, Pro-326, and Pro-332 each carry the 4-hydroxyproline modification. A compositionally biased stretch (gly residues) spans 321-330 (GERGGPGSRG). Lys-341 carries the 5-hydroxylysine modification. A 4-hydroxyproline mark is found at Pro-350, Pro-359, Pro-365, Pro-371, Pro-380, Pro-383, Pro-392, Pro-401, Pro-407, Pro-419, Pro-429, Pro-432, Pro-450, Pro-468, Pro-474, Pro-480, Pro-486, Pro-492, Pro-498, Pro-510, Pro-526, Pro-532, Pro-538, and Pro-547. The span at 374–400 (KGLTGSPGSPGPDGKTGPPGPAGQDGR) shows a compositional bias: low complexity. The span at 462-489 (QGPAGSPGFQGLPGPAGPPGEAGKPGEQ) shows a compositional bias: low complexity. The span at 522–535 (APGAPGSQGAPGLQ) shows a compositional bias: low complexity. At Lys-559 the chain carries 5-hydroxylysine. 4-hydroxyproline is present on residues Pro-565, Pro-580, and Pro-586. Residues 592–606 (SGPSGPAGPTGARGA) show a composition bias toward low complexity. Residue Ser-595 is modified to Phosphoserine. Residues Pro-607, Pro-613, Pro-616, Pro-625, Pro-631, Pro-649, Pro-658, and Pro-667 each carry the 4-hydroxyproline modification. Residues 619–646 (AGFAGPPGADGQPGAKGEPGDAGAKGDA) are compositionally biased toward low complexity. Residues 648–660 (PPGPAGPTGPPGP) are compositionally biased toward pro residues. Lys-670 carries the post-translational modification 5-hydroxylysine. Residues 675–691 (SAGPPGATGFPGAAGRV) show a composition bias toward low complexity. 2 positions are modified to 4-hydroxyproline: Pro-679 and Pro-685. Residue Pro-693 is modified to 3-hydroxyproline. 4-hydroxyproline occurs at positions 694, 703, 706, 727, 736, 745, 754, 772, 781, 784, 790, 805, 811, 817, 826, and 832. Over residues 720–729 (ETGPAGRPGE) the composition is skewed to low complexity. Low complexity predominate over residues 739 to 754 (SGEKGSPGADGPAGAP). Pro residues predominate over residues 804–814 (PPGPVGPPGLA). The segment covering 816–831 (PPGESGREGSPGAEGS) has biased composition (low complexity). Lys-841 bears the 5-hydroxylysine mark. Residues 849 to 864 (PGPPGAPGAPGAPGPV) are compositionally biased toward pro residues. 4-hydroxyproline is present on residues Pro-852, Pro-855, and Pro-858. Positions 885-899 (AGPAGARGPAGPQGP) are enriched in low complexity. Residues 900–914 (RGDKGETGEQGDRGI) are compositionally biased toward basic and acidic residues. At Lys-903 the chain carries 5-hydroxylysine. The residue at position 915 (Lys-915) is a 5-hydroxylysine; alternate. O-linked (Gal...) hydroxylysine; alternate glycosylation occurs at Lys-915. 4 positions are modified to 4-hydroxyproline: Pro-930, Pro-933, Pro-951, and Pro-966. A compositionally biased stretch (low complexity) spans 933–966 (PGEQGPSGASGPAGPRGPPGSAGSPGKDGLNGLP). Position 971 is a 3-hydroxyproline (Pro-971). Pro-972 carries the 4-hydroxyproline modification. Residues 984–999 (VGPPGPPGPPGPPGPP) are compositionally biased toward pro residues. At Pro-986 the chain carries 3-hydroxyproline. Pro-987 is modified (4-hydroxyproline). Residue Pro-989 is modified to 3-hydroxyproline. Residue Pro-990 is modified to 4-hydroxyproline. Pro-992 is modified (3-hydroxyproline). Residues Pro-993, Pro-996, and Pro-999 each carry the 4-hydroxyproline modification.

Belongs to the fibrillar collagen family. Trimers of one alpha 2(I) and two alpha 1(I) chains. Contains mostly 4-hydroxyproline. Proline residues at the third position of the tripeptide repeating unit (G-X-Y) are hydroxylated in some or all of the chains. In terms of processing, contains 3-hydroxyproline at a few sites. This modification occurs on the first proline residue in the sequence motif Gly-Pro-Hyp, where Hyp is 4-hydroxyproline. Post-translationally, lysine residues at the third position of the tripeptide repeating unit (G-X-Y) are 5-hydroxylated in some or all of the chains. O-glycosylated on hydroxylated lysine residues. The O-linked glycan consists of a Glc-Gal disaccharide. As to expression, expressed in bones.

The protein resides in the secreted. The protein localises to the extracellular space. Its subcellular location is the extracellular matrix. Type I collagen is a member of group I collagen (fibrillar forming collagen). The sequence is that of Collagen alpha-1(I) chain from Choloepus hoffmanni (Hoffmann's two-fingered sloth).